The following is a 272-amino-acid chain: MICOS complex subunit MIC27 (272 aa).

Residues 1–24 (MAAKVARLAAAASSLPFVCAVYAE) constitute a mitochondrion transit peptide. The Mitochondrial intermembrane portion of the chain corresponds to 28–107 (SKSQLVKPKQ…YVYLKNPPPD (80 aa)). The chain crosses the membrane as a helical span at residues 108-126 (FLPRVGIITISGLAGVVLA). Over 127 to 134 (RKDSRFKK) the chain is Mitochondrial matrix. The chain crosses the membrane as a helical span at residues 135–152 (IAYPLGLTTLGISVCYPA). The Mitochondrial intermembrane portion of the chain corresponds to 153 to 272 (QAVVIAKITG…EDVDMYSTRS (120 aa)). The disordered stretch occupies residues 187–272 (SKLQQESKSV…EDVDMYSTRS (86 aa)). Polar residues-rich tracts occupy residues 188-198 (KLQQESKSVTQ) and 206-245 (ISNVQFESAIESRSSNRTESSPIESWSTKDPLPSSGTVKT).

The protein belongs to the apolipoprotein O/MICOS complex subunit Mic27 family. In terms of assembly, component of the mitochondrial contact site and cristae organizing system (MICOS) complex (also known as MINOS or MitOS complex).

The protein resides in the mitochondrion inner membrane. Functionally, component of the MICOS complex, a large protein complex of the mitochondrial inner membrane that plays crucial roles in the maintenance of crista junctions, inner membrane architecture, and formation of contact sites to the outer membrane. The protein is MICOS complex subunit MIC27 (APOOL) of Gallus gallus (Chicken).